A 310-amino-acid chain; its full sequence is ADP-L-glycero-D-manno-heptose-6-epimerase (310 aa).

NADP(+) contacts are provided by residues 10–11, 31–32, Lys-38, Lys-53, 75–79, and Asn-92; these read FI, DN, and EGACS. The active-site Proton acceptor is the Tyr-140. Lys-144 contributes to the NADP(+) binding site. Residue Asn-169 coordinates substrate. Residues Val-170 and Lys-178 each contribute to the NADP(+) site. The active-site Proton acceptor is Lys-178. Residues Ser-180, His-187, 201 to 204, Arg-209, and Tyr-272 each bind substrate; that span reads FSGS.

The protein belongs to the NAD(P)-dependent epimerase/dehydratase family. HldD subfamily. In terms of assembly, homopentamer. The cofactor is NADP(+).

It catalyses the reaction ADP-D-glycero-beta-D-manno-heptose = ADP-L-glycero-beta-D-manno-heptose. The protein operates within nucleotide-sugar biosynthesis; ADP-L-glycero-beta-D-manno-heptose biosynthesis; ADP-L-glycero-beta-D-manno-heptose from D-glycero-beta-D-manno-heptose 7-phosphate: step 4/4. Its function is as follows. Catalyzes the interconversion between ADP-D-glycero-beta-D-manno-heptose and ADP-L-glycero-beta-D-manno-heptose via an epimerization at carbon 6 of the heptose. The polypeptide is ADP-L-glycero-D-manno-heptose-6-epimerase (Pectobacterium carotovorum subsp. carotovorum (strain PC1)).